We begin with the raw amino-acid sequence, 919 residues long: 2-oxoadipate dehydrogenase complex component E1 (919 aa).

Residues Lys183 and Lys188 each carry the N6-succinyllysine modification. Residues 299–320 (GKTRGRQQSRQDGDYSPDNSAQ) form a disordered region. Lys800 and Lys818 each carry N6-succinyllysine.

It belongs to the alpha-ketoglutarate dehydrogenase family. As to quaternary structure, the 2-oxoadipate dehydrogenase complex is composed of OADH (2-oxoadipate dehydrogenase; E1a), DLST (dihydrolipoamide succinyltransferase; E2) and DLD (dihydrolipoamide dehydrogenase; E3). E1a functional unit is a dimer. Interacts with DLST. Thiamine diphosphate serves as cofactor.

It is found in the mitochondrion. It carries out the reaction N(6)-[(R)-lipoyl]-L-lysyl-[protein] + 2-oxoadipate + H(+) = N(6)-[(R)-S(8)-glutaryldihydrolipoyl]-L-lysyl-[protein] + CO2. It participates in amino-acid degradation. In terms of biological role, 2-oxoadipate dehydrogenase (E1a) component of the 2-oxoadipate dehydrogenase complex (OADHC). Participates in the first step, rate limiting for the overall conversion of 2-oxoadipate (alpha-ketoadipate) to glutaryl-CoA and CO(2) catalyzed by the whole OADHC. Catalyzes the irreversible decarboxylation of 2-oxoadipate via the thiamine diphosphate (ThDP) cofactor and subsequent transfer of the decarboxylated acyl intermediate on an oxidized dihydrolipoyl group that is covalently amidated to the E2 enzyme (dihydrolipoyllysine-residue succinyltransferase or DLST). Can catalyze the decarboxylation of 2-oxoglutarate in vitro, but at a much lower rate than 2-oxoadipate. Responsible for the last step of L-lysine, L-hydroxylysine and L-tryptophan catabolism with the common product being 2-oxoadipate. This is 2-oxoadipate dehydrogenase complex component E1 (DHTKD1) from Homo sapiens (Human).